A 685-amino-acid chain; its full sequence is Polyphosphate kinase (685 aa).

Asn-45 serves as a coordination point for ATP. Mg(2+) contacts are provided by Arg-375 and Arg-405. His-435 serves as the catalytic Phosphohistidine intermediate. ATP is bound by residues Tyr-468, Arg-564, and His-592.

This sequence belongs to the polyphosphate kinase 1 (PPK1) family. Mg(2+) serves as cofactor. Post-translationally, an intermediate of this reaction is the autophosphorylated ppk in which a phosphate is covalently linked to a histidine residue through a N-P bond.

It catalyses the reaction [phosphate](n) + ATP = [phosphate](n+1) + ADP. Its function is as follows. Catalyzes the reversible transfer of the terminal phosphate of ATP to form a long-chain polyphosphate (polyP). The chain is Polyphosphate kinase from Neisseria gonorrhoeae (strain ATCC 700825 / FA 1090).